The primary structure comprises 435 residues: Methylenetetrahydrofolate--tRNA-(uracil-5-)-methyltransferase TrmFO (435 aa).

Residue 9–14 (GAGLAG) participates in FAD binding.

It belongs to the MnmG family. TrmFO subfamily. It depends on FAD as a cofactor.

It is found in the cytoplasm. The enzyme catalyses uridine(54) in tRNA + (6R)-5,10-methylene-5,6,7,8-tetrahydrofolate + NADH + H(+) = 5-methyluridine(54) in tRNA + (6S)-5,6,7,8-tetrahydrofolate + NAD(+). The catalysed reaction is uridine(54) in tRNA + (6R)-5,10-methylene-5,6,7,8-tetrahydrofolate + NADPH + H(+) = 5-methyluridine(54) in tRNA + (6S)-5,6,7,8-tetrahydrofolate + NADP(+). Functionally, catalyzes the folate-dependent formation of 5-methyl-uridine at position 54 (M-5-U54) in all tRNAs. The sequence is that of Methylenetetrahydrofolate--tRNA-(uracil-5-)-methyltransferase TrmFO from Staphylococcus aureus (strain JH1).